A 370-amino-acid polypeptide reads, in one-letter code: Anhydro-N-acetylmuramic acid kinase (370 aa).

ATP is bound at residue 13-20 (GTSMDGVD).

This sequence belongs to the anhydro-N-acetylmuramic acid kinase family.

It carries out the reaction 1,6-anhydro-N-acetyl-beta-muramate + ATP + H2O = N-acetyl-D-muramate 6-phosphate + ADP + H(+). Its pathway is amino-sugar metabolism; 1,6-anhydro-N-acetylmuramate degradation. The protein operates within cell wall biogenesis; peptidoglycan recycling. Functionally, catalyzes the specific phosphorylation of 1,6-anhydro-N-acetylmuramic acid (anhMurNAc) with the simultaneous cleavage of the 1,6-anhydro ring, generating MurNAc-6-P. Is required for the utilization of anhMurNAc either imported from the medium or derived from its own cell wall murein, and thus plays a role in cell wall recycling. The protein is Anhydro-N-acetylmuramic acid kinase of Vibrio vulnificus (strain CMCP6).